The chain runs to 286 residues: Nucleotide-binding protein Sfum_2066 (286 aa).

8–15 (GLSGSGKS) is an ATP binding site. GTP is bound at residue 59-62 (DIRE).

The protein belongs to the RapZ-like family.

In terms of biological role, displays ATPase and GTPase activities. In Syntrophobacter fumaroxidans (strain DSM 10017 / MPOB), this protein is Nucleotide-binding protein Sfum_2066.